The sequence spans 357 residues: tRNA-specific 2-thiouridylase MnmA (357 aa).

ATP is bound by residues 7 to 14 (GMSGGVDS) and Met33. Cys103 functions as the Nucleophile in the catalytic mechanism. A disulfide bridge connects residues Cys103 and Cys200. Gly127 lines the ATP pocket. The tract at residues 150 to 152 (KDQ) is interaction with tRNA. Cys200 serves as the catalytic Cysteine persulfide intermediate. Positions 306-307 (RY) are interaction with tRNA.

Belongs to the MnmA/TRMU family.

Its subcellular location is the cytoplasm. It carries out the reaction S-sulfanyl-L-cysteinyl-[protein] + uridine(34) in tRNA + AH2 + ATP = 2-thiouridine(34) in tRNA + L-cysteinyl-[protein] + A + AMP + diphosphate + H(+). Its function is as follows. Catalyzes the 2-thiolation of uridine at the wobble position (U34) of tRNA, leading to the formation of s(2)U34. The sequence is that of tRNA-specific 2-thiouridylase MnmA from Lachnoclostridium phytofermentans (strain ATCC 700394 / DSM 18823 / ISDg) (Clostridium phytofermentans).